The following is a 225-amino-acid chain: Cobalt transport protein CbiM (225 aa).

A run of 6 helical transmembrane segments spans residues 7–27 (VLPL…VAIA), 43–63 (PFVG…VPVP), 76–96 (LAAV…ALLI), 108–128 (TLGA…YFAF), 143–163 (FLAG…ALAL), and 175–195 (FTGV…LEGV).

Belongs to the CbiM family. In terms of assembly, forms an energy-coupling factor (ECF) transporter complex composed of an ATP-binding protein (A component, CbiO), a transmembrane protein (T component, CbiQ) and 2 possible substrate-capture proteins (S components, CbiM and CbiN) of unknown stoichimetry.

It is found in the cell inner membrane. Its pathway is cofactor biosynthesis; adenosylcobalamin biosynthesis. In terms of biological role, part of the energy-coupling factor (ECF) transporter complex CbiMNOQ involved in cobalt import. The protein is Cobalt transport protein CbiM of Sorangium cellulosum (strain So ce56) (Polyangium cellulosum (strain So ce56)).